We begin with the raw amino-acid sequence, 877 residues long: Alanine--tRNA ligase (877 aa).

Positions 565, 569, 667, and 671 each coordinate Zn(2+).

Belongs to the class-II aminoacyl-tRNA synthetase family. Requires Zn(2+) as cofactor.

The protein resides in the cytoplasm. It catalyses the reaction tRNA(Ala) + L-alanine + ATP = L-alanyl-tRNA(Ala) + AMP + diphosphate. Functionally, catalyzes the attachment of alanine to tRNA(Ala) in a two-step reaction: alanine is first activated by ATP to form Ala-AMP and then transferred to the acceptor end of tRNA(Ala). Also edits incorrectly charged Ser-tRNA(Ala) and Gly-tRNA(Ala) via its editing domain. The protein is Alanine--tRNA ligase of Chromobacterium violaceum (strain ATCC 12472 / DSM 30191 / JCM 1249 / CCUG 213 / NBRC 12614 / NCIMB 9131 / NCTC 9757 / MK).